We begin with the raw amino-acid sequence, 357 residues long: Dihydroorotate dehydrogenase (quinone) (357 aa).

FMN contacts are provided by residues 67 to 71 and Thr-91; that span reads AGFDK. Lys-71 is a binding site for substrate. 116–120 is a substrate binding site; sequence NRMGF. FMN-binding residues include Asn-153 and Asn-186. Asn-186 is a binding site for substrate. Catalysis depends on Ser-189, which acts as the Nucleophile. Substrate is bound at residue Asn-191. Residues Lys-228 and Thr-256 each contribute to the FMN site. 257–258 lines the substrate pocket; sequence NT. FMN-binding positions include Gly-282, Gly-311, and 332 to 333; that span reads YT.

It belongs to the dihydroorotate dehydrogenase family. Type 2 subfamily. Monomer. FMN serves as cofactor.

The protein localises to the cell membrane. It carries out the reaction (S)-dihydroorotate + a quinone = orotate + a quinol. Its pathway is pyrimidine metabolism; UMP biosynthesis via de novo pathway; orotate from (S)-dihydroorotate (quinone route): step 1/1. Its function is as follows. Catalyzes the conversion of dihydroorotate to orotate with quinone as electron acceptor. The chain is Dihydroorotate dehydrogenase (quinone) from Arthrobacter sp. (strain FB24).